The following is a 202-amino-acid chain: Ras-related protein Rab-1A (202 aa).

Residues 15–23 (GDSGVGKSC), 33–40 (YSESFIST), 63–67 (DTAGQ), 121–124 (NKSD), and 151–153 (SAK) contribute to the GTP site. The Effector region motif lies at 37-45 (FISTIGVDF). A disordered region spans residues 180–202 (QTVDKNKVVPGSSAPISPKSGCC). S-geranylgeranyl cysteine attachment occurs at residues C201 and C202.

Belongs to the small GTPase superfamily. Rab family.

It localises to the cell membrane. The chain is Ras-related protein Rab-1A (rab1A) from Dictyostelium discoideum (Social amoeba).